A 181-amino-acid chain; its full sequence is Large ribosomal subunit protein uL5 (181 aa).

It belongs to the universal ribosomal protein uL5 family. In terms of assembly, part of the 50S ribosomal subunit; part of the 5S rRNA/L5/L18/L25 subcomplex. Contacts the 5S rRNA and the P site tRNA. Forms a bridge to the 30S subunit in the 70S ribosome.

Its function is as follows. This is one of the proteins that bind and probably mediate the attachment of the 5S RNA into the large ribosomal subunit, where it forms part of the central protuberance. In the 70S ribosome it contacts protein S13 of the 30S subunit (bridge B1b), connecting the 2 subunits; this bridge is implicated in subunit movement. Contacts the P site tRNA; the 5S rRNA and some of its associated proteins might help stabilize positioning of ribosome-bound tRNAs. The chain is Large ribosomal subunit protein uL5 from Trichodesmium erythraeum (strain IMS101).